The chain runs to 177 residues: Protein PrsK (177 aa).

An N-terminal signal peptide occupies residues 1 to 21 (MIKSTGALLLFAALSAGQAMA).

The protein resides in the fimbrium. The protein is Protein PrsK (prsK) of Escherichia coli.